We begin with the raw amino-acid sequence, 956 residues long: Probable hypoxanthine oxidase XdhD (956 aa).

Mo-molybdopterin-binding residues include glutamine 414, phenylalanine 445, and alanine 727.

The protein belongs to the xanthine dehydrogenase family. [2Fe-2S] cluster is required as a cofactor. Requires Mo-molybdopterin as cofactor.

Probably has no xanthine dehydrogenase activity; however deletion results in increased adenine sensitivity, suggesting that this protein contributes to the conversion of adenine to guanine nucleotides during purine salvage. This is Probable hypoxanthine oxidase XdhD (xdhD) from Escherichia coli O157:H7.